The primary structure comprises 303 residues: Proteasome subunit beta (303 aa).

A propeptide spans 1–64 (MTWPDRDTSA…VTPSDAVPHG (64 aa)) (removed in mature form; by autocatalysis). Residue threonine 65 is the Nucleophile of the active site.

This sequence belongs to the peptidase T1B family. The 20S proteasome core is composed of 14 alpha and 14 beta subunits that assemble into four stacked heptameric rings, resulting in a barrel-shaped structure. The two inner rings, each composed of seven catalytic beta subunits, are sandwiched by two outer rings, each composed of seven alpha subunits. The catalytic chamber with the active sites is on the inside of the barrel. Has a gated structure, the ends of the cylinder being occluded by the N-termini of the alpha-subunits. Is capped by the proteasome-associated ATPase, ARC.

Its subcellular location is the cytoplasm. The catalysed reaction is Cleavage of peptide bonds with very broad specificity.. It participates in protein degradation; proteasomal Pup-dependent pathway. With respect to regulation, the formation of the proteasomal ATPase ARC-20S proteasome complex, likely via the docking of the C-termini of ARC into the intersubunit pockets in the alpha-rings, may trigger opening of the gate for substrate entry. Interconversion between the open-gate and close-gate conformations leads to a dynamic regulation of the 20S proteasome proteolysis activity. In terms of biological role, component of the proteasome core, a large protease complex with broad specificity involved in protein degradation. This Mycolicibacterium gilvum (strain PYR-GCK) (Mycobacterium gilvum (strain PYR-GCK)) protein is Proteasome subunit beta.